The primary structure comprises 191 residues: Molybdenum cofactor guanylyltransferase (191 aa).

GTP contacts are provided by residues 11 to 13 (LCG), lysine 23, aspartate 66, and aspartate 97. Aspartate 97 lines the Mg(2+) pocket.

This sequence belongs to the MobA family. Monomer. It depends on Mg(2+) as a cofactor.

Its subcellular location is the cytoplasm. It carries out the reaction Mo-molybdopterin + GTP + H(+) = Mo-molybdopterin guanine dinucleotide + diphosphate. In terms of biological role, transfers a GMP moiety from GTP to Mo-molybdopterin (Mo-MPT) cofactor (Moco or molybdenum cofactor) to form Mo-molybdopterin guanine dinucleotide (Mo-MGD) cofactor. The chain is Molybdenum cofactor guanylyltransferase from Campylobacter jejuni subsp. jejuni serotype O:6 (strain 81116 / NCTC 11828).